The sequence spans 359 residues: snRNA-activating protein complex subunit 2 (359 aa).

The segment covering M1–P11 has biased composition (basic residues). 3 disordered regions span residues M1–T22, N157–T221, and T291–I327.

As to quaternary structure, part of the SNAPc complex composed of 5 subunits: SNAPC1, SNAPC2, SNAPC3, SNAPC4 and SNAPC5. SNAPC2 interacts with TBP and SNAPC4.

The protein localises to the nucleus. Its function is as follows. Part of the SNAPc complex required for the transcription of both RNA polymerase II and III small-nuclear RNA genes. Binds to the proximal sequence element (PSE), a non-TATA-box basal promoter element common to these 2 types of genes. Recruits TBP and BRF2 to the U6 snRNA TATA box. This is snRNA-activating protein complex subunit 2 (Snapc2) from Mus musculus (Mouse).